A 648-amino-acid chain; its full sequence is Nucleoside triphosphatase I (648 aa).

Positions 48 to 212 (FIGLKNLNSM…NNLIGLLRPN (165 aa)) constitute a Helicase ATP-binding domain. 61 to 68 (WDTGMGKT) provides a ligand contact to ATP. Residues 150 to 153 (DEVH) carry the DEXH box motif. Residues 378-541 (YIETCKIILN…KINVIFDLLK (164 aa)) enclose the Helicase C-terminal domain. Positions 467–533 (DIIILDMPWN…DIIKDKQGKI (67 aa)) are binding to the cap-specific mRNA (nucleoside-2'-O-)-methyltransferase.

Belongs to the helicase family. NPH I subfamily. Monomer. Interacts (via C-terminus) with RAP94 (via N-terminus). Interacts with the cap-specific mRNA (nucleoside-2'-O-)-methyltransferase.

The protein resides in the virion. It carries out the reaction a ribonucleoside 5'-triphosphate + H2O = a ribonucleoside 5'-diphosphate + phosphate + H(+). Functionally, DNA-dependent ATPase required for providing the needed energy to achieve the termination of early transcripts. Acts in concert with the RAP94 subunit of the virion RNA polymerase and the capping enzyme/VTF to catalyze release of UUUUUNU-containing nascent RNA from the elongation complex. NPH-I must bind ssDNA in order to exhibit ATPase activity. This Amsacta (AmEPV) protein is Nucleoside triphosphatase I (NPH1).